The sequence spans 1078 residues: MAFYSCCWVLLALTWHTSAYGPDQRAQKKGDIILGGLFPIHFGVAAKDQDLKSRPESVECIRYNFRGFRWLQAMIFAIEEINSSPALLPNLTLGYRIFDTCNTVSKALEATLSFVAQNKIDSLNLDEFCNCSEHIPSTIAVVGATGSGVSTAVANLLGLFYIPQVSYASSSRLLSNKNQFKSFLRTIPNDEHQATAMADIIEYFRWNWVGTIAADDDYGRPGIEKFREEAEERDICIDFSELISQYSDEEEIQHVVEVIQNSTAKVIVVFSSGPDLEPLIKEIVRRNITGKIWLASEAWASSSLIAMPQYFHVVGGTIGFALKAGQIPGFREFLKKVHPRKSVHNGFAKEFWEETFNCHLQEGAKGPLPVDTFLRGHEESGDRFSNSSTAFRPLCTGDENISSVETPYIDYTHLRISYNVYLAVYSIAHALQDIYTCLPGRGLFTNGSCADIKKVEAWQVLKHLRHLNFTNNMGEQVTFDECGDLVGNYSIINWHLSPEDGSIVFKEVGYYNVYAKKGERLFINEEKILWSGFSREVPFSNCSRDCLAGTRKGIIEGEPTCCFECVECPDGEYSDETDASACNKCPDDFWSNENHTSCIAKEIEFLSWTEPFGIALTLFAVLGIFLTAFVLGVFIKFRNTPIVKATNRELSYLLLFSLLCCFSSSLFFIGEPQDWTCRLRQPAFGISFVLCISCILVKTNRVLLVFEAKIPTSFHRKWWGLNLQFLLVFLCTFMQIVICVIWLYTAPPSSYRNQELEDEIIFITCHEGSLMALGFLIGYTCLLAAICFFFAFKSRKLPENFNEAKFITFSMLIFFIVWISFIPAYASTYGKFVSAVEVIAILAASFGLLACIFFNKIYIILFKPSRNTIEEVRCSTAAHAFKVAARATLRRSNVSRKRSSSLGGSTGSTPSSSISSKSNSEDPFPQPERQKQQQPLALTQQEQQQQPLTLPQQQRSQQQPRCKQKVIFGSGTVTFSLSFDEPQKNAMAHRNSTHQNSLEAQKSSDTLTRHEPLLPLQCGETDLDLTVQETGLQGPVGGDQRPEVEDPEELSPALVVSSSQSFVISGGGSTVTENVVNS.

The N-terminal stretch at 1 to 19 (MAFYSCCWVLLALTWHTSA) is a signal peptide. The Extracellular portion of the chain corresponds to 20-610 (YGPDQRAQKK…KEIEFLSWTE (591 aa)). A ligand-binding 1 (LB1) region spans residues 22–188 (PDQRAQKKGD…QFKSFLRTIP (167 aa)). Cys-60 and Cys-101 are oxidised to a cystine. 66–70 (RGFRW) contributes to the phosphate binding site. Ca(2+) is bound by residues Ile-81, Ser-84, Leu-87, and Leu-88. Asn-90 carries N-linked (GlcNAc...) asparagine glycosylation. Thr-100 contributes to the Ca(2+) binding site. N-linked (GlcNAc...) asparagine glycosylation occurs at Asn-130. Position 145 (Thr-145) interacts with Ca(2+). L-tryptophan is bound by residues Ser-147, Ala-168, and Ser-170. Ca(2+) contacts are provided by Ser-170, Pro-188, Asp-190, Glu-231, and Asp-234. Positions 189-324 (NDEHQATAMA…GGTIGFALKA (136 aa)) are ligand-binding 2 (LB2). 7 cysteine pairs are disulfide-bonded: Cys-236-Cys-561, Cys-358-Cys-395, Cys-437-Cys-449, Cys-542-Cys-562, Cys-546-Cys-565, Cys-568-Cys-582, and Cys-585-Cys-598. Residues Asp-238 and Ser-240 each coordinate spermine. N-linked (GlcNAc...) asparagine glycosylation is found at Asn-261 and Asn-287. A Ca(2+)-binding site is contributed by Glu-297. Glu-297 lines the L-tryptophan pocket. N-linked (GlcNAc...) asparagine glycosylation is found at Asn-386 and Asn-400. 415–417 (RIS) is a phosphate binding site. 3 N-linked (GlcNAc...) asparagine glycosylation sites follow: Asn-446, Asn-468, and Asn-488. Tyr-489 lines the Ca(2+) pocket. Residue Asn-541 is glycosylated (N-linked (GlcNAc...) asparagine). A cysteine-rich (CR) region spans residues 542–612 (CSRDCLAGTR…IEFLSWTEPF (71 aa)). Ca(2+) is bound at residue Gly-557. A glycan (N-linked (GlcNAc...) asparagine) is linked at Asn-594. The helical transmembrane segment at 611–636 (PFGIALTLFAVLGIFLTAFVLGVFIK) threads the bilayer. Residues 637 to 648 (FRNTPIVKATNR) lie on the Cytoplasmic side of the membrane. Residues 637-648 (FRNTPIVKATNR) form an intracellular loop 1 (ICL1) region. Residues 649-668 (ELSYLLLFSLLCCFSSSLFF) form a helical membrane-spanning segment. Topologically, residues 669–674 (IGEPQD) are extracellular. A helical membrane pass occupies residues 675 to 698 (WTCRLRQPAFGISFVLCISCILVK). The Cytoplasmic portion of the chain corresponds to 699–722 (TNRVLLVFEAKIPTSFHRKWWGLN). The tract at residues 699–722 (TNRVLLVFEAKIPTSFHRKWWGLN) is intracellular loop 2 (ICL2). Residues 723 to 745 (LQFLLVFLCTFMQIVICVIWLYT) traverse the membrane as a helical segment. Topologically, residues 746–769 (APPSSYRNQELEDEIIFITCHEGS) are extracellular. Residues 770–789 (LMALGFLIGYTCLLAAICFF) traverse the membrane as a helical segment. Over 790–805 (FAFKSRKLPENFNEAK) the chain is Cytoplasmic. Residues 790 to 805 (FAFKSRKLPENFNEAK) form an intracellular loop 3 (ICL3) region. Residues 806–828 (FITFSMLIFFIVWISFIPAYAST) traverse the membrane as a helical segment. At 829-832 (YGKF) the chain is on the extracellular side. A helical membrane pass occupies residues 833 to 854 (VSAVEVIAILAASFGLLACIFF). Residues 855–1078 (NKIYIILFKP…STVTENVVNS (224 aa)) are Cytoplasmic-facing. The C-terminus stretch occupies residues 855–1078 (NKIYIILFKP…STVTENVVNS (224 aa)). An interaction with RNF19A region spans residues 880–900 (AFKVAARATLRRSNVSRKRSS). Residue Thr-888 is modified to Phosphothreonine; by PKC. An arginine-rich retention motif region spans residues 890 to 898 (RRSNVSRKR). Ser-892 is subject to Phosphoserine; by PKC. 3 disordered regions span residues 892–963 (SNVS…PRCK), 986–1006 (AMAH…SSDT), and 1030–1055 (TGLQ…PALV). Ser-899 is modified (phosphoserine; by PKA). Positions 900-918 (SSLGGSTGSTPSSSISSKS) are enriched in low complexity. Position 920 is a phosphoserine (Ser-920). Residues 932–960 (QQQPLALTQQEQQQQPLTLPQQQRSQQQP) show a composition bias toward low complexity. The span at 993-1006 (THQNSLEAQKSSDT) shows a compositional bias: polar residues. At Ser-1061 the chain carries Phosphoserine.

The protein belongs to the G-protein coupled receptor 3 family. In terms of assembly, homodimer; disulfide-linked. Interacts with VCP. Interacts with ARRB1. Phosphorylation at Thr-888 by PKC impairs coupling with G(q)/G(11) G-proteins, while it does not affect G(i)/G(o)-coupling. Phosphorylation at Ser-892 by PKC and Ser-899 by PKA promote plasma membrane localization. Post-translationally, ubiquitinated by RNF19A; which induces proteasomal degradation. In terms of processing, N-glycosylated. As to expression, expressed in the temporal lobe, frontal lobe, parietal lobe, hippocampus, and cerebellum. Also found in kidney, lung, liver, heart, skeletal muscle, placenta.

It localises to the cell membrane. With respect to regulation, in resting state, adopts an open conformation, anion-binding promoting the inactive configuration. Upon aromatic amino acid-binding, the groove in the extracellular venus flytrap module is closed, thereby inducing the formation of a novel homodimer interface between subunits. Calcium ions stabilize the active state by enhancing homodimer interactions between membrane-proximal domains to fully activate the receptor. Upon activation, the homodimer adopts an asymmetric configuration of the 7-transmembrane region that primes one protomer for G-protein coupling. G-protein binding expands the transmembrane dimer interface; the restriction imposed by the receptor dimer, in combination with intracellular loop 2 (ICL2), enables G-protein activation by facilitating conformational transition of G-protein alpha. Coupling to different classes of G-proteins results in distinct CASR-G-protein interfaces. Activated by glucose, which acts as a positive allosteric modulator. Activated by positive allosteric modulator drugs cinacalcet, evocalcet and etelcalcetide, which are clinically used for the treatment of hyperparathyroidism and familial hypocalciuric hypercalcemia. Inhibited by NPS-2143, a negative allosteric modulator tested for the treatment of hypocalcemia. Activated by velcalcetide (AMG 416), a D-amino acid-containing peptide agonist that is being evaluated for the treatment of secondary hyperparathyroidism in chronic kidney disease patients receiving hemodialysis. Velcalcetide agonist acts by forming a disulfide bond with Cys-482. Its function is as follows. G-protein-coupled receptor that senses changes in the extracellular concentration of calcium ions and plays a key role in maintaining calcium homeostasis. Senses fluctuations in the circulating calcium concentration: activated by elevated circulating calcium, leading to decreased parathyroid hormone (PTH) secretion in parathyroid glands. In kidneys, acts as a key regulator of renal tubular calcium resorption. Ligand binding causes a conformation change that triggers signaling via guanine nucleotide-binding proteins (G-proteins) and modulates the activity of downstream effectors. CASR is coupled with different G(q)/G(11), G(i)/G(o)- or G(s)-classes of G-proteins depending on the context. In the parathyroid and kidney, CASR signals through G(q)/G(11) and G(i)/G(o) G-proteins: G(q)/G(11) coupling activates phospholipase C-beta, releasing diacylglycerol (DAG) and inositol 1,4,5-trisphosphate (IP3) second messengers, while G(i)/G(o) coupling mediates inhibition of adenylate cyclase activity. The G-protein-coupled receptor activity is activated by a co-agonist mechanism: aromatic amino acids, such as Trp or Phe, act concertedly with divalent cations, such as calcium or magnesium, to achieve full receptor activation. Acts as an activator of the NLRP3 inflammasome via G(i)/G(o)-mediated signaling: down-regulation of cyclic AMP (cAMP) relieving NLRP3 inhibition by cAMP. Acts as a regulator of proton-sensing receptor GPR68 in a seesaw manner: CASR-mediated signaling inhibits GPR68 signaling in response to extracellular calcium, while GPR68 inhibits CASR in presence of extracellular protons. This is Extracellular calcium-sensing receptor from Homo sapiens (Human).